A 192-amino-acid polypeptide reads, in one-letter code: UPF0149 protein YgfB (192 aa).

The protein belongs to the UPF0149 family.

The sequence is that of UPF0149 protein YgfB from Salmonella agona (strain SL483).